Consider the following 101-residue polypeptide: NADH-quinone oxidoreductase subunit K (101 aa).

Helical transmembrane passes span 4 to 24 (LGHYLTLGAILFALSVIGIFL), 30 to 50 (IVLLMCIELMLLAVNLNFVAF), and 61 to 81 (VFVFFILTVAAAESAIGLAIL).

This sequence belongs to the complex I subunit 4L family. In terms of assembly, NDH-1 is composed of 14 different subunits. Subunits NuoA, H, J, K, L, M, N constitute the membrane sector of the complex.

The protein localises to the cell inner membrane. The catalysed reaction is a quinone + NADH + 5 H(+)(in) = a quinol + NAD(+) + 4 H(+)(out). In terms of biological role, NDH-1 shuttles electrons from NADH, via FMN and iron-sulfur (Fe-S) centers, to quinones in the respiratory chain. The immediate electron acceptor for the enzyme in this species is believed to be ubiquinone. Couples the redox reaction to proton translocation (for every two electrons transferred, four hydrogen ions are translocated across the cytoplasmic membrane), and thus conserves the redox energy in a proton gradient. The polypeptide is NADH-quinone oxidoreductase subunit K (Leptothrix cholodnii (strain ATCC 51168 / LMG 8142 / SP-6) (Leptothrix discophora (strain SP-6))).